Here is a 657-residue protein sequence, read N- to C-terminus: MPDRLVPATLAFRDDGTLVSPAYGDIYHSAAGAIAQANHVFVAGNGLPARWQQRRTFTIVETGFGTGCNFLATWAAWRDDPARCERLHFVSVEKHPFSREDLRRAAAHIVANTTISASVDALADAWPPLVPGLHRLEFDAGRVVLTLVFGDALERLPTLVARADAFYLDGFAPSKNADLWSIDVFRALARMADEHATFATYSSSGVVKRALDEAGFAYRKVDGFAGKRAMLVGEYAPRWRMRRHEPPRAWPNAAARRALVIGAGVAGCAVVERLAARGWNVTLIERHERIASEASGNPAGVFHPLMTRDDNVASRLTRAGFLYALARWRALEAGGHAFARSTHGMVHLAESADDFARMRDAFDALGAPSDYARLLDTDAARAYLNLPVAHGGLLFPHGGAVWPAALADAQCAAAGDRVQRLTRTEVARLERNGDEWHALDAHGRTLAQAPVVVLANAGDAVRLAGLRHVALQPVRGQLTLLPAASASPPPCPAIGDGYAVPLDDGTLLIGATFEPDDVDPAIRVAGHAENLERVRRLLPGLIGDVPALDTLRGRVAFRWVAGDRLPLIGPLADEAQAVANARALSGAKARDLPRMPGLYGAFGYGSRGLVWAALGAELIASQLDGEPWPIERELAEAVDPARFLIRALRARQVSAAD.

Residues 1–236 (MPDRLVPATL…KRAMLVGEYA (236 aa)) form a tRNA (mnm(5)s(2)U34)-methyltransferase region. Residues 261–657 (IGAGVAGCAV…LRARQVSAAD (397 aa)) form an FAD-dependent cmnm(5)s(2)U34 oxidoreductase region.

The protein in the N-terminal section; belongs to the methyltransferase superfamily. tRNA (mnm(5)s(2)U34)-methyltransferase family. This sequence in the C-terminal section; belongs to the DAO family. FAD serves as cofactor.

The protein resides in the cytoplasm. The enzyme catalyses 5-aminomethyl-2-thiouridine(34) in tRNA + S-adenosyl-L-methionine = 5-methylaminomethyl-2-thiouridine(34) in tRNA + S-adenosyl-L-homocysteine + H(+). Its function is as follows. Catalyzes the last two steps in the biosynthesis of 5-methylaminomethyl-2-thiouridine (mnm(5)s(2)U) at the wobble position (U34) in tRNA. Catalyzes the FAD-dependent demodification of cmnm(5)s(2)U34 to nm(5)s(2)U34, followed by the transfer of a methyl group from S-adenosyl-L-methionine to nm(5)s(2)U34, to form mnm(5)s(2)U34. In Burkholderia multivorans (strain ATCC 17616 / 249), this protein is tRNA 5-methylaminomethyl-2-thiouridine biosynthesis bifunctional protein MnmC.